The following is a 151-amino-acid chain: uncharacterized protein (151 aa).

It to equivalent protein in phage 82.

This is an uncharacterized protein from Escherichia coli (strain K12).